Here is a 494-residue protein sequence, read N- to C-terminus: Zinc finger and SCAN domain-containing protein 30 (494 aa).

The SCAN box domain maps to 48-130 (RQKFRQFSYS…TMLEELEKEL (83 aa)). K197 is covalently cross-linked (Glycyl lysine isopeptide (Lys-Gly) (interchain with G-Cter in SUMO2)). C2H2-type zinc fingers lie at residues 301 to 323 (YECF…QRIH), 329 to 351 (YACK…QRIH), 357 to 379 (YECC…RRIH), 385 to 407 (YECG…KKIH), 413 to 435 (YECI…QRIH), 441 to 463 (YECN…QRIH), and 469 to 491 (YECS…QRTH).

The protein belongs to the krueppel C2H2-type zinc-finger protein family.

It is found in the nucleus. May be involved in transcriptional regulation. The polypeptide is Zinc finger and SCAN domain-containing protein 30 (ZSCAN30) (Homo sapiens (Human)).